Here is a 503-residue protein sequence, read N- to C-terminus: Transmembrane prolyl 4-hydroxylase (503 aa).

The disordered stretch occupies residues 1-49; sequence MAAAVATVQRPEAETVEEASNLQWPLPPEHRPSGAATRPGDSEDAPVRP. Over 1–61 the chain is Cytoplasmic; it reads MAAAVATVQR…KPRGICSRAY (61 aa). Residues 62 to 82 traverse the membrane as a helical; Signal-anchor for type II membrane protein segment; the sequence is FLVLMVFVHLYLGNVLALLLF. Over 83-503 the chain is Lumenal; the sequence is VHYSNGDEST…RAYSDARVEL (421 aa). The tract at residues 90–110 is disordered; that stretch reads ESTDPGPQRREQSPQPVPTLG. 2 consecutive EF-hand domains span residues 186–221 and 225–260; these read AMQV…GNGR and PENI…DFHK. Asp199, Asn201, Asp203, Arg205, Glu210, Asp238, Asp240, Asp242, and Glu249 together coordinate Ca(2+). The Fe2OG dioxygenase domain occupies 310–461; it reads EFSEPLQVVR…KWIANNWINV (152 aa). His329 and Asp331 together coordinate Fe cation. N-linked (GlcNAc...) asparagine glycans are attached at residues Asn349 and Asn369. Residue Glu375 participates in Fe cation binding. N-linked (GlcNAc...) asparagine glycosylation occurs at Asn383. Lys452 serves as a coordination point for 2-oxoglutarate.

As to quaternary structure, homodimer. Requires Fe(2+) as cofactor. L-ascorbate is required as a cofactor. Glycosylated. In terms of tissue distribution, highest expression levels are detected in the eye and brain, especially in the retinal epithelium cells and cortical neurons. Also expressed in skeletal muscle, lung, heart, adrenal gland, kidney, prostate, thyroid and testis.

It localises to the endoplasmic reticulum membrane. The catalysed reaction is L-prolyl-[hypoxia-inducible factor alpha subunit] + 2-oxoglutarate + O2 = trans-4-hydroxy-L-prolyl-[hypoxia-inducible factor alpha subunit] + succinate + CO2. Its function is as follows. Catalyzes the post-translational formation of 4-hydroxyproline in hypoxia-inducible factor (HIF) alpha proteins. Hydroxylates HIF1A at 'Pro-402' and 'Pro-564'. May function as a cellular oxygen sensor and, under normoxic conditions, may target HIF through the hydroxylation for proteasomal degradation via the von Hippel-Lindau ubiquitination complex. The protein is Transmembrane prolyl 4-hydroxylase (P4htm) of Mus musculus (Mouse).